We begin with the raw amino-acid sequence, 222 residues long: Germin-like protein subfamily 1 member 16 (222 aa).

The signal sequence occupies residues Met-1 to Ala-22. Cys-32 and Cys-48 are oxidised to a cystine. The region spanning Ser-62 to Lys-213 is the Cupin type-1 domain. An N-linked (GlcNAc...) asparagine glycan is attached at Asn-77. His-110, His-112, Glu-117, and His-159 together coordinate Mn(2+).

This sequence belongs to the germin family. As to quaternary structure, oligomer (believed to be a pentamer but probably hexamer).

It localises to the secreted. The protein resides in the extracellular space. Its subcellular location is the apoplast. Functionally, may play a role in plant defense. Probably has no oxalate oxidase activity even if the active site is conserved. In Arabidopsis thaliana (Mouse-ear cress), this protein is Germin-like protein subfamily 1 member 16.